Here is a 301-residue protein sequence, read N- to C-terminus: Ethylmalonyl-CoA decarboxylase (301 aa).

Position 211 is an N6-acetyllysine; alternate (lysine 211). Lysine 211 is subject to N6-succinyllysine; alternate. N6-succinyllysine is present on lysine 295.

The protein belongs to the enoyl-CoA hydratase/isomerase family.

The protein localises to the cytoplasm. Its subcellular location is the cytosol. It carries out the reaction (2S)-ethylmalonyl-CoA + H(+) = butanoyl-CoA + CO2. The enzyme catalyses (S)-methylmalonyl-CoA + H(+) = propanoyl-CoA + CO2. It catalyses the reaction (2R)-ethylmalonyl-CoA + H(+) = butanoyl-CoA + CO2. Functionally, decarboxylates ethylmalonyl-CoA, a potentially toxic metabolite, to form butyryl-CoA, suggesting it might be involved in metabolite proofreading. Acts preferentially on (S)-ethylmalonyl-CoA but also has some activity on the (R)-isomer. Also has methylmalonyl-CoA decarboxylase activity at lower level. The sequence is that of Ethylmalonyl-CoA decarboxylase (ECHDC1) from Pongo abelii (Sumatran orangutan).